Reading from the N-terminus, the 187-residue chain is Virulence protein ATR13 (187 aa).

Residues 1-19 form the signal peptide; that stretch reads MRLVHAVLLPGIIVFVSNG. Residues 38 to 41 carry the RxLR motif; it reads RQLR. Residues 50-92 are leucine heptad repeat region; it reads LSRASFGLGKAQDPLDKFFRKIINSRKPIETSYSAKGIHEKII. 4 consecutive repeat copies span residues 93 to 103, 104 to 114, 115 to 125, and 126 to 136. The tract at residues 93 to 136 is 4 X 11 AA tandem repeats; the sequence is KAYDRHVFESKKAHDRHVSKSKKAHGRHVSKSKMAHDRHVSKSE. The tract at residues 104–136 is disordered; sequence KAHDRHVSKSKKAHGRHVSKSKMAHDRHVSKSE. The segment covering 111 to 125 has biased composition (basic residues); it reads SKSKKAHGRHVSKSK. The segment covering 126 to 136 has biased composition (basic and acidic residues); the sequence is MAHDRHVSKSE. The interval 137-187 is highly variable C-terminus domain; it reads KAPIQYASVADYLKKIYPGTDIERIVSTLKRHDEVGAKDLGAKLQTAVASQ.

The protein belongs to the RxLR effector family.

The protein localises to the secreted. It is found in the host nucleus. Its subcellular location is the host nucleolus. It localises to the host cytoplasm. Its function is as follows. Secreted effector that acts as an elicitor of hypersensitive response (HR) specifically on plants carrying defense protein RPP13. Recognition of ATR13 by RPP13 initiates defense responses that are effective against oomycete, bacterial and viral pathogens. Due to high polymorphism, ATR13-Emoy2 does not recognize RPP13-Nd, the RPP13 defense protein from Arabidopsis thaliana ecotype Niederzenz. ATR13-Emoy2 is recognized by RPP13 variants RPP13-UKID44, RPP13-UKID65 and RPP13-UKID71. In Hyaloperonospora arabidopsidis (strain Emoy2) (Downy mildew agent), this protein is Virulence protein ATR13.